The chain runs to 329 residues: Aurora kinase B (329 aa).

A compositionally biased stretch (basic residues) spans 1–14 (MTLSRAKHANRNHL). The interval 1 to 21 (MTLSRAKHANRNHLPHLLAKV) is disordered. Positions 53 to 305 (FEMGAHLGRG…LVDVMTHYWV (253 aa)) constitute a Protein kinase domain. ATP contacts are provided by residues 59–67 (LGRGKFGRV) and Lys82. The Proton acceptor role is filled by Asp178.

This sequence belongs to the protein kinase superfamily. Ser/Thr protein kinase family. Aurora subfamily. Interacts with Incenp and Cdc37. The cofactor is Mg(2+).

It is found in the chromosome. It localises to the cytoplasm. The protein localises to the cytoskeleton. The protein resides in the midbody. The catalysed reaction is L-seryl-[protein] + ATP = O-phospho-L-seryl-[protein] + ADP + H(+). It carries out the reaction L-threonyl-[protein] + ATP = O-phospho-L-threonyl-[protein] + ADP + H(+). Serine/threonine-protein kinase that mediates both meiotic and mitotic chromosome segregation. Required for histone H3 'Ser-10' phosphorylation. Phosphorylates mei-S332 within residues 124-126 and stabilizes its association with centromeres during meiosis. May regulate the function of the ESCRT-III complex core component shrb during abscission of germline cells in oogenesis. This Drosophila melanogaster (Fruit fly) protein is Aurora kinase B.